Reading from the N-terminus, the 90-residue chain is U7-theraphotoxin-Hhn1b (90 aa).

The N-terminal stretch at 1 to 19 is a signal peptide; it reads MKTAIFTVVLALAVFAVLS. A propeptide spanning residues 20-50 is cleaved from the precursor; the sequence is FGWEANEKALSEEFTELIHEKEAASETEARE. 3 disulfides stabilise this stretch: Cys-51–Cys-65, Cys-58–Cys-70, and Cys-64–Cys-81.

Belongs to the neurotoxin 10 (Hwtx-1) family. 13 (Hntx-13) subfamily. In terms of tissue distribution, expressed by the venom gland.

The protein resides in the secreted. Functionally, ion channel inhibitor. The protein is U7-theraphotoxin-Hhn1b of Cyriopagopus hainanus (Chinese bird spider).